We begin with the raw amino-acid sequence, 373 residues long: UDP-glucose 4-epimerase 3 (373 aa).

27–58 contacts NAD(+); that stretch reads SVLVTGGAGYIGTHTVLRLLEKGFAVTVVDNF. A substrate-binding site is contributed by serine 153. The Proton acceptor role is filled by tyrosine 177.

It belongs to the NAD(P)-dependent epimerase/dehydratase family. It depends on NAD(+) as a cofactor.

The catalysed reaction is UDP-alpha-D-glucose = UDP-alpha-D-galactose. It participates in carbohydrate metabolism; galactose metabolism. Its function is as follows. Catalyzes the interconversion between UDP-glucose and UDP-galactose. The chain is UDP-glucose 4-epimerase 3 (UGE-3) from Oryza sativa subsp. japonica (Rice).